The following is a 360-amino-acid chain: Peptide chain release factor 1 (360 aa).

Residue Gln-235 is modified to N5-methylglutamine.

Belongs to the prokaryotic/mitochondrial release factor family. In terms of processing, methylated by PrmC. Methylation increases the termination efficiency of RF1.

It is found in the cytoplasm. Its function is as follows. Peptide chain release factor 1 directs the termination of translation in response to the peptide chain termination codons UAG and UAA. In Bordetella pertussis (strain Tohama I / ATCC BAA-589 / NCTC 13251), this protein is Peptide chain release factor 1.